We begin with the raw amino-acid sequence, 165 residues long: V-type proton ATPase subunit c2 (165 aa).

The Lumenal segment spans residues 1–12 (MASTFSGDETAP). Residues 13–33 (FFGFLGAAAALVFSCMGAAYG) traverse the membrane as a helical segment. At 34–55 (TAKSGVGVASMGVMRPELVMKS) the chain is on the cytoplasmic side. Residues 56–76 (IVPVVMAGVLGIYGLIIAVII) form a helical membrane-spanning segment. At 77–95 (STGINPKAKSYYLFDGYAH) the chain is on the lumenal side. The helical transmembrane segment at 96-117 (LSSGLACGLAGLSAGMAIGIVG) threads the bilayer. Topologically, residues 118-129 (DAGVRANAQQPK) are cytoplasmic. Residues 130-155 (LFVGMILILIFAEALALYGLIVGIIL) traverse the membrane as a helical segment. Topologically, residues 156-165 (SSRAGQSRAE) are lumenal.

Belongs to the V-ATPase proteolipid subunit family. As to quaternary structure, V-ATPase is a heteromultimeric enzyme composed of a peripheral catalytic V1 complex (components A to H) attached to an integral membrane V0 proton pore complex (components: a, c, c'', d and e). The proteolipid components c and c'' are present as a hexameric ring that forms the proton-conducting pore. In terms of tissue distribution, expressed in leaf, root, flower and silique, with lower expression in roots.

The protein resides in the vacuole membrane. Proton-conducting pore forming subunit of the membrane integral V0 complex of vacuolar ATPase. V-ATPase is responsible for acidifying a variety of intracellular compartments in eukaryotic cells. The chain is V-type proton ATPase subunit c2 (VHA-c2) from Arabidopsis thaliana (Mouse-ear cress).